A 560-amino-acid chain; its full sequence is Protein SINE1 (560 aa).

Glycine 2 carries the N-acetylglycine modification. An ARMADILLO-type fold region spans residues 7–287; the sequence is PILRQELANL…VRGAAYEAMM (281 aa). The 44-residue stretch at 517 to 560 folds into the KASH domain; that stretch reads KKKKKKMSYAKLVIAISFVVVALFATVILMVNQDDDVGYYTVPT. Residues 528 to 548 form a helical membrane-spanning segment; that stretch reads LVIAISFVVVALFATVILMVN. Residues 557-560 carry the Required for nuclear localization motif; the sequence is TVPT.

Interacts with SUN1 and SUN2. Binds to F-actin. In terms of tissue distribution, preferentially expressed in guards cells, but also detected in root cells.

The protein localises to the nucleus membrane. Functionally, plays a role in nucleus positioning in guard cells. This is Protein SINE1 from Arabidopsis thaliana (Mouse-ear cress).